Here is a 487-residue protein sequence, read N- to C-terminus: Argininosuccinate lyase (487 aa).

It belongs to the lyase 1 family. Argininosuccinate lyase subfamily.

It is found in the cytoplasm. The enzyme catalyses 2-(N(omega)-L-arginino)succinate = fumarate + L-arginine. Its pathway is amino-acid biosynthesis; L-arginine biosynthesis; L-arginine from L-ornithine and carbamoyl phosphate: step 3/3. The sequence is that of Argininosuccinate lyase from Methanothrix thermoacetophila (strain DSM 6194 / JCM 14653 / NBRC 101360 / PT) (Methanosaeta thermophila).